Reading from the N-terminus, the 283-residue chain is 4-hydroxy-tetrahydrodipicolinate reductase (283 aa).

Residues 15 to 20 (GALGRM) and 116 to 118 (GTT) contribute to the NAD(+) site. The active-site Proton donor/acceptor is His172. His173 lines the (S)-2,3,4,5-tetrahydrodipicolinate pocket. Lys176 (proton donor) is an active-site residue. Residue 182–183 (GT) participates in (S)-2,3,4,5-tetrahydrodipicolinate binding.

Belongs to the DapB family.

It is found in the cytoplasm. It catalyses the reaction (S)-2,3,4,5-tetrahydrodipicolinate + NAD(+) + H2O = (2S,4S)-4-hydroxy-2,3,4,5-tetrahydrodipicolinate + NADH + H(+). The catalysed reaction is (S)-2,3,4,5-tetrahydrodipicolinate + NADP(+) + H2O = (2S,4S)-4-hydroxy-2,3,4,5-tetrahydrodipicolinate + NADPH + H(+). Its pathway is amino-acid biosynthesis; L-lysine biosynthesis via DAP pathway; (S)-tetrahydrodipicolinate from L-aspartate: step 4/4. Functionally, catalyzes the conversion of 4-hydroxy-tetrahydrodipicolinate (HTPA) to tetrahydrodipicolinate. This Prochlorococcus marinus (strain MIT 9313) protein is 4-hydroxy-tetrahydrodipicolinate reductase.